Reading from the N-terminus, the 132-residue chain is U-scoloptoxin(11)-Sa1a (132 aa).

Positions 1–19 (MIRFFAFVLFFATQELILC) are cleaved as a signal peptide.

The protein belongs to the scoloptoxin-11 family. Contains 5 disulfide bonds. In terms of tissue distribution, expressed by the venom gland.

It localises to the secreted. This chain is U-scoloptoxin(11)-Sa1a, found in Scolopendra alternans (Florida Keys giant centipede).